Here is a 393-residue protein sequence, read N- to C-terminus: MNDVFLKALPVLQKLTTAGFEAYFVGGSVRDYLLNRTISDVDIATSAFPEEVKEIFQTSYDTGIAHGTVTVRENNEFYEVTTFRTEGTYEDFRRPSEVTFIRSLEEDLKRRDFTMNAIAMDEHFALQDPFSGQLAIQNKEIKAVGKASERFHEDALRMMRAVRFLSQLDFELDKETEKALESQIELLQHTSVERITVEWLKMMKGKAAKRAIELLLKVKMETYLPGLKDEKSALSEFASWDWEKRTTEESIWLGLVVAVKPNNVNAFLKAWKLPNKTIQLVNKAYQDALKMKETWLKDELYHAGKAVFSLVNELNVIRGKENNQHKVSQAYEALPIHSKKDLAITGADLLKWSGESAGPWVKETLDKVECGVLSNEINNEKIQIKRWLGYHEE.

ATP contacts are provided by G27 and R30. G27 and R30 together coordinate CTP. Mg(2+) is bound by residues D40 and D42. The ATP site is built by R111, D154, R157, R160, and R163. CTP-binding residues include R111, D154, R157, R160, and R163.

Belongs to the tRNA nucleotidyltransferase/poly(A) polymerase family. Bacterial CCA-adding enzyme type 3 subfamily. As to quaternary structure, homodimer. Requires Mg(2+) as cofactor.

The catalysed reaction is a tRNA precursor + 2 CTP + ATP = a tRNA with a 3' CCA end + 3 diphosphate. The enzyme catalyses a tRNA with a 3' CCA end + 2 CTP + ATP = a tRNA with a 3' CCACCA end + 3 diphosphate. Functionally, catalyzes the addition and repair of the essential 3'-terminal CCA sequence in tRNAs without using a nucleic acid template. Adds these three nucleotides in the order of C, C, and A to the tRNA nucleotide-73, using CTP and ATP as substrates and producing inorganic pyrophosphate. tRNA 3'-terminal CCA addition is required both for tRNA processing and repair. Also involved in tRNA surveillance by mediating tandem CCA addition to generate a CCACCA at the 3' terminus of unstable tRNAs. While stable tRNAs receive only 3'-terminal CCA, unstable tRNAs are marked with CCACCA and rapidly degraded. This Listeria monocytogenes serotype 4b (strain F2365) protein is CCA-adding enzyme.